Consider the following 249-residue polypeptide: Pulmonary surfactant-associated protein A (249 aa).

The N-terminal stretch at 1 to 20 (MLRWPLALTFLLLAVSGLEC) is a signal peptide. In terms of domain architecture, Collagen-like spans 28 to 100 (ASPGIPGTPG…PGERGPPGLP (73 aa)). The disordered stretch occupies residues 29–102 (SPGIPGTPGS…ERGPPGLPAH (74 aa)). Residues Pro-30, Pro-33, Pro-36, Pro-42, Pro-54, Pro-57, Pro-63, and Pro-70 each carry the 4-hydroxyproline modification. The span at 42 to 51 (PGRDGRDGIK) shows a compositional bias: basic and acidic residues. The segment covering 84–93 (ERGEKGEPGE) has biased composition (basic and acidic residues). Residues 133-249 (AVGEKVFSTN…QQYRLAICEF (117 aa)) form the C-type lectin domain. 2 cysteine pairs are disulfide-bonded: Cys-155/Cys-247 and Cys-225/Cys-239. N-linked (GlcNAc...) asparagine glycosylation is present at Asn-208. Ca(2+)-binding residues include Glu-216, Arg-218, Asn-235, and Asp-236.

The protein belongs to the SFTPA family. Oligomeric complex of 6 set of homotrimers.

It is found in the secreted. The protein localises to the extracellular space. The protein resides in the extracellular matrix. It localises to the surface film. In terms of biological role, in presence of calcium ions, it binds to surfactant phospholipids and contributes to lower the surface tension at the air-liquid interface in the alveoli of the mammalian lung and is essential for normal respiration. Enhances the expression of MYO18A/SP-R210 on alveolar macrophages. This chain is Pulmonary surfactant-associated protein A (SFTPA1), found in Sus scrofa (Pig).